A 370-amino-acid chain; its full sequence is Flagellar P-ring protein (370 aa).

An N-terminal signal peptide occupies residues 1 to 21 (MKYILIKLSIVMIFIINSASK).

Belongs to the FlgI family. In terms of assembly, the basal body constitutes a major portion of the flagellar organelle and consists of four rings (L,P,S, and M) mounted on a central rod.

Its subcellular location is the bacterial flagellum basal body. Functionally, assembles around the rod to form the L-ring and probably protects the motor/basal body from shearing forces during rotation. In Wigglesworthia glossinidia brevipalpis, this protein is Flagellar P-ring protein.